We begin with the raw amino-acid sequence, 360 residues long: METPILIKLGNGLSIPSVQELAKLTLAEIPSRYTCTGESPLNNIGASVTDDETVPVIDLQNLLSPEPVVGKLELDKLHSACKEWGFFQLVNHGVDALLMDNIKSEIKGFFNLPMNEKTKYGQQDGDFEGFGQPYIESEDQRLDWTEVFSMLSLPLHLRKPHLFPELPLPFRETLESYLSKMKKLSTVVFEMLEKSLQLVEIKGMTDLFEDGLQTMRMNYYPPCPRPELVLGLTSHSDFSGLTILLQLNEVEGLQIRKEERWISIKPLPDAFIVNVGDILEIMTNGIYRSVEHRAVVNSTKERLSIATFHDSKLESEIGPISSLVTPETPALFKRGRYEDILKENLSRKLDGKSFLDYMRM.

A Fe2OG dioxygenase domain is found at 211-311; it reads GLQTMRMNYY…RLSIATFHDS (101 aa). Tyr220 provides a ligand contact to 2-oxoglutarate. Fe cation contacts are provided by His235, Asp237, and His292. Positions 302 and 304 each coordinate 2-oxoglutarate.

The protein belongs to the iron/ascorbate-dependent oxidoreductase family. It depends on L-ascorbate as a cofactor. The cofactor is Fe cation. As to expression, mainly expressed in stems, capsules and leaves and, to a lower extent, in roots.

The catalysed reaction is codeine + 2-oxoglutarate + O2 = morphine + formaldehyde + succinate + CO2. The enzyme catalyses thebaine + 2-oxoglutarate + O2 = oripavine + formaldehyde + succinate + CO2. It carries out the reaction (S)-scoulerine + 2-oxoglutarate + O2 = (S)-3-O-demethylscoulerine + formaldehyde + succinate + CO2. It catalyses the reaction thebaine + 2-oxoglutarate + O2 = neopinone + formaldehyde + succinate + CO2. The catalysed reaction is (S)-reticuline + 2-oxoglutarate + O2 = (S)-6-O-demethylreticuline + formaldehyde + succinate + CO2. The enzyme catalyses (S)-tetrahydropalmatine + S-adenosyl-L-methionine = (S)-cis-N-methyltetrahydropalmatine + S-adenosyl-L-homocysteine. It functions in the pathway alkaloid biosynthesis; morphine biosynthesis. With respect to regulation, moderate substrate inhibition. Not inhibited in vitro by acylcyclohexanediones. Its function is as follows. Non-heme dioxygenase involved in biosynthesis of morphinan-type benzylisoquinoline and opiate alkaloids natural products. Mediates the conversion of codeine to morphine. Also catalyzes, with lower efficiency, the 3-O-demethylation of thebaine to oripavine and of (S)-scoulerine to 3-O-demethylscoulerine. Supports, with a lower turnover, the conversion of codeinone to morphinone, of thebaine to neopinone, and of neopine to neomorphine. Supports dealkylation reactions such as O,O-demethylenation in the metabolism of protopine, benzo[c]phenanthridine, and rhoeadine alkaloids; cleaves a methylenedioxy bridge leaving two hydroxyl groups. Catalyzes the O,O-demethylenation of methylenedioxy bridges on protopine alkaloids such as allocryptopine, cryptopine and protopine. No activity with (S)-reticuline, salutaridine, papaverine, (S)-corytuberine, oripavine, pavine or noscapine. The sequence is that of Codeine O-demethylase from Papaver somniferum (Opium poppy).